We begin with the raw amino-acid sequence, 156 residues long: Arginine repressor (156 aa).

Belongs to the ArgR family.

It is found in the cytoplasm. It participates in amino-acid biosynthesis; L-arginine biosynthesis [regulation]. In terms of biological role, regulates arginine biosynthesis genes. In Cronobacter sakazakii (strain ATCC BAA-894) (Enterobacter sakazakii), this protein is Arginine repressor.